The primary structure comprises 432 residues: Probable exopolygalacturonase X (432 aa).

An N-terminal signal peptide occupies residues 1 to 23; sequence MKFSYSFVQVVTLLLSLSPSVEG. 3 N-linked (GlcNAc...) asparagine glycosylation sites follow: asparagine 113, asparagine 129, and asparagine 199. Residues 231–252 form a PbH1 1 repeat; it reads SDNIVIQNSVINNGDDCVSFKP. Aspartate 245 acts as the Proton donor in catalysis. A disulfide bond links cysteine 247 and cysteine 264. N-linked (GlcNAc...) asparagine glycans are attached at residues asparagine 253 and asparagine 265. PbH1 repeat units lie at residues 254–274, 285–306, and 327–348; these read STNILVQNLHCNGSHGISVGS, VQNVLVYNISMYNASDGARIKV, and VKNVTYNQMYIENVDWAIEVTQ. Residue histidine 268 is part of the active site. Asparagine 292, asparagine 297, asparagine 329, asparagine 354, and asparagine 364 each carry an N-linked (GlcNAc...) asparagine glycan. One copy of the PbH1 5 repeat lies at 362–394; it reads PSNLTISDIHFKNFRGTTSGKRDPNVGTIVCSS. Cysteines 392 and 398 form a disulfide.

This sequence belongs to the glycosyl hydrolase 28 family.

The protein resides in the secreted. It catalyses the reaction [(1-&gt;4)-alpha-D-galacturonosyl](n) + H2O = alpha-D-galacturonate + [(1-&gt;4)-alpha-D-galacturonosyl](n-1). Specific in hydrolyzing the terminal glycosidic bond of polygalacturonic acid and oligogalacturonates. The protein is Probable exopolygalacturonase X (pgaX) of Aspergillus fumigatus (strain CBS 144.89 / FGSC A1163 / CEA10) (Neosartorya fumigata).